Here is a 299-residue protein sequence, read N- to C-terminus: Recombination-associated protein RdgC (299 aa).

The protein belongs to the RdgC family.

Its subcellular location is the cytoplasm. It localises to the nucleoid. In terms of biological role, may be involved in recombination. The chain is Recombination-associated protein RdgC from Neisseria meningitidis serogroup A / serotype 4A (strain DSM 15465 / Z2491).